A 160-amino-acid polypeptide reads, in one-letter code: uncharacterized protein (160 aa).

Positions 69–145 form a coiled coil; that stretch reads NQLLNMMAQA…EQREHVKEQR (77 aa). Disordered regions lie at residues 82-109 and 129-160; these read GVRLQGRRQKKINPKRLQRQVSKELKNA and KKKQIMKEQREHVKEQRYMLKKQKAKKKHRGK. Over residues 86-99 the composition is skewed to basic residues; sequence QGRRQKKINPKRLQ. Over residues 133 to 146 the composition is skewed to basic and acidic residues; the sequence is IMKEQREHVKEQRY. Residues 147–160 show a composition bias toward basic residues; sequence MLKKQKAKKKHRGK.

This is an uncharacterized protein from Bacillus subtilis (strain 168).